We begin with the raw amino-acid sequence, 1019 residues long: Photoactivated adenylate cyclase subunit alpha-like protein FB (1019 aa).

The BLUF 1 domain maps to 55-148 (LRRLMYLSAS…GRLYGEWHMK (94 aa)). The 129-residue stretch at 204–332 (VVTFIYLVEF…DCINTASRIT (129 aa)) folds into the Guanylate cyclase 1 domain. One can recognise a BLUF 2 domain in the interval 467–559 (LITLTYISQA…REYGSPLDMT (93 aa)). Residues 615–744 (VLLATDICSF…EVSARVMEVV (130 aa)) enclose the Guanylate cyclase 2 domain. Residues 825–839 (APGRGAPAGGIPSSP) show a composition bias toward low complexity. Residues 825-862 (APGRGAPAGGIPSSPKVRPPGRTNSVSSYTPDPNEALD) form a disordered region. A compositionally biased stretch (polar residues) spans 846–855 (RTNSVSSYTP).

This sequence belongs to the adenylyl cyclase class-4/guanylyl cyclase family. In terms of assembly, heterotetramer of two alpha and two beta subunits.

It is found in the cell projection. It localises to the cilium. The protein resides in the flagellum. This is Photoactivated adenylate cyclase subunit alpha-like protein FB from Euglena gracilis.